Reading from the N-terminus, the 324-residue chain is Phospho-N-acetylmuramoyl-pentapeptide-transferase (324 aa).

A run of 9 helical transmembrane segments spans residues Val-13 to Pro-33, Gly-57 to Ile-77, Gly-85 to Leu-105, Met-121 to Thr-141, Ile-143 to Val-163, Ile-179 to Phe-199, Thr-201 to Leu-221, Leu-238 to Val-260, and Val-303 to Ala-323.

The protein belongs to the glycosyltransferase 4 family. MraY subfamily. Requires Mg(2+) as cofactor.

The protein localises to the cell membrane. It carries out the reaction UDP-N-acetyl-alpha-D-muramoyl-L-alanyl-gamma-D-glutamyl-meso-2,6-diaminopimeloyl-D-alanyl-D-alanine + di-trans,octa-cis-undecaprenyl phosphate = di-trans,octa-cis-undecaprenyl diphospho-N-acetyl-alpha-D-muramoyl-L-alanyl-D-glutamyl-meso-2,6-diaminopimeloyl-D-alanyl-D-alanine + UMP. It participates in cell wall biogenesis; peptidoglycan biosynthesis. Its function is as follows. Catalyzes the initial step of the lipid cycle reactions in the biosynthesis of the cell wall peptidoglycan: transfers peptidoglycan precursor phospho-MurNAc-pentapeptide from UDP-MurNAc-pentapeptide onto the lipid carrier undecaprenyl phosphate, yielding undecaprenyl-pyrophosphoryl-MurNAc-pentapeptide, known as lipid I. This Clostridium botulinum (strain Eklund 17B / Type B) protein is Phospho-N-acetylmuramoyl-pentapeptide-transferase.